Reading from the N-terminus, the 573-residue chain is DNA ligase (573 aa).

E250 serves as a coordination point for ATP. K252 serves as the catalytic N6-AMP-lysine intermediate. Residues R257, R272, E301, F342, R432, and K438 each coordinate ATP.

It belongs to the ATP-dependent DNA ligase family. It depends on Mg(2+) as a cofactor.

It carries out the reaction ATP + (deoxyribonucleotide)n-3'-hydroxyl + 5'-phospho-(deoxyribonucleotide)m = (deoxyribonucleotide)n+m + AMP + diphosphate.. In terms of biological role, DNA ligase that seals nicks in double-stranded DNA during DNA replication, DNA recombination and DNA repair. The protein is DNA ligase of Methanococcus maripaludis (strain C6 / ATCC BAA-1332).